The primary structure comprises 466 residues: Secreted RxLR effector protein 101 (466 aa).

A signal peptide spans 1–21 (MRGAYSVITALLVVASSQIAA). The RxLR-dEER signature appears at 48 to 63 (RYLRGSQHVHDSNEER). Disordered stretches follow at residues 99–127 (KMPHAATAGKKVSRVTRTGKKMTSHGANA) and 384–405 (RTFNGNTDTASLPSKRSKVRSS). Residues 109–121 (KVSRVTRTGKKMT) show a composition bias toward basic residues. The span at 385–395 (TFNGNTDTASL) shows a compositional bias: polar residues.

It belongs to the RxLR effector family.

The protein resides in the secreted. It is found in the host nucleus. In terms of biological role, secreted effector that partially suppresses the host cell death induced by cell death-inducing proteins. This Plasmopara viticola (Downy mildew of grapevine) protein is Secreted RxLR effector protein 101.